Reading from the N-terminus, the 178-residue chain is ATP-dependent protease subunit HslV (178 aa).

Threonine 5 is a catalytic residue. Na(+) is bound by residues glycine 161, cysteine 164, and threonine 167.

Belongs to the peptidase T1B family. HslV subfamily. A double ring-shaped homohexamer of HslV is capped on each side by a ring-shaped HslU homohexamer. The assembly of the HslU/HslV complex is dependent on binding of ATP.

The protein localises to the cytoplasm. It carries out the reaction ATP-dependent cleavage of peptide bonds with broad specificity.. With respect to regulation, allosterically activated by HslU binding. Protease subunit of a proteasome-like degradation complex believed to be a general protein degrading machinery. This is ATP-dependent protease subunit HslV from Aliarcobacter butzleri (strain RM4018) (Arcobacter butzleri).